The sequence spans 336 residues: Histidinol-phosphate aminotransferase (336 aa).

Position 204 is an N6-(pyridoxal phosphate)lysine (K204).

This sequence belongs to the class-II pyridoxal-phosphate-dependent aminotransferase family. Histidinol-phosphate aminotransferase subfamily. Requires pyridoxal 5'-phosphate as cofactor.

It carries out the reaction L-histidinol phosphate + 2-oxoglutarate = 3-(imidazol-4-yl)-2-oxopropyl phosphate + L-glutamate. It functions in the pathway amino-acid biosynthesis; L-histidine biosynthesis; L-histidine from 5-phospho-alpha-D-ribose 1-diphosphate: step 7/9. The protein is Histidinol-phosphate aminotransferase of Thermococcus kodakarensis (strain ATCC BAA-918 / JCM 12380 / KOD1) (Pyrococcus kodakaraensis (strain KOD1)).